Consider the following 206-residue polypeptide: Large ribosomal subunit protein eL8 (206 aa).

Belongs to the eukaryotic ribosomal protein eL8 family. Component of the large ribosomal subunit.

It is found in the cytoplasm. The sequence is that of Large ribosomal subunit protein eL8 (RPL7A) from Encephalitozoon cuniculi (strain GB-M1) (Microsporidian parasite).